Consider the following 835-residue polypeptide: uncharacterized protein (835 aa).

This is an uncharacterized protein from Mycoplasma genitalium (strain ATCC 33530 / DSM 19775 / NCTC 10195 / G37) (Mycoplasmoides genitalium).